A 388-amino-acid chain; its full sequence is Sulfate adenylyltransferase (388 aa).

This sequence belongs to the sulfate adenylyltransferase family.

The catalysed reaction is sulfate + ATP + H(+) = adenosine 5'-phosphosulfate + diphosphate. It functions in the pathway sulfur metabolism; hydrogen sulfide biosynthesis; sulfite from sulfate: step 1/3. The sequence is that of Sulfate adenylyltransferase from Trichodesmium erythraeum (strain IMS101).